We begin with the raw amino-acid sequence, 114 residues long: Large ribosomal subunit protein bL20 (114 aa).

It belongs to the bacterial ribosomal protein bL20 family.

Binds directly to 23S ribosomal RNA and is necessary for the in vitro assembly process of the 50S ribosomal subunit. It is not involved in the protein synthesizing functions of that subunit. This is Large ribosomal subunit protein bL20 from Anaeromyxobacter sp. (strain Fw109-5).